The following is a 1427-amino-acid chain: DNA-directed RNA polymerase subunit beta' (1427 aa).

Residues Cys-66, Cys-68, Cys-81, and Cys-84 each contribute to the Zn(2+) site. Asp-472, Asp-474, and Asp-476 together coordinate Mg(2+). Residues Cys-815, Cys-889, Cys-896, and Cys-899 each contribute to the Zn(2+) site.

The protein belongs to the RNA polymerase beta' chain family. In terms of assembly, the RNAP catalytic core consists of 2 alpha, 1 beta, 1 beta' and 1 omega subunit. When a sigma factor is associated with the core the holoenzyme is formed, which can initiate transcription. Mg(2+) serves as cofactor. Zn(2+) is required as a cofactor.

It catalyses the reaction RNA(n) + a ribonucleoside 5'-triphosphate = RNA(n+1) + diphosphate. In terms of biological role, DNA-dependent RNA polymerase catalyzes the transcription of DNA into RNA using the four ribonucleoside triphosphates as substrates. This chain is DNA-directed RNA polymerase subunit beta', found in Bacteroides fragilis (strain YCH46).